The primary structure comprises 138 residues: UPF0201 protein PH1010 (138 aa).

This sequence belongs to the UPF0201 family.

The polypeptide is UPF0201 protein PH1010 (Pyrococcus horikoshii (strain ATCC 700860 / DSM 12428 / JCM 9974 / NBRC 100139 / OT-3)).